The following is a 370-amino-acid chain: MYKIFFRLVFKRMDPERAHYAAFRWIRLAARIPVLRTFVAAALAPRHKELRTEALGLRMHGPFGLAAGFDKNAIAIDGMAMLGFDHVEIGTVTGEPQPGNPKKRLFRLVADRALINRMGFNNEGSAAVAARLAARNPVFRTTVGVNIGKTKVVPEDEAAADYVKSTERLAAHADYLVVNVSSPNTPGLRNLQATESLRPLLTAVREAADRTVTTRRVPLLVKIAPDLADEDVDAVADLAVELGLDGVIATNTTVAREGLGLKSHPDLVGEAGGLSGAPLKDRSLEVLSRLYARVGDRITLVGVGGVENAEDAWQRILAGATLVQGYSAFIYEGPAYARAIHQGLAARLAASPYATLAEAVGAETRKQAAA.

Residues 67–71 and Thr-91 each bind FMN; that span reads AGFDK. Lys-71 serves as a coordination point for substrate. 116 to 120 serves as a coordination point for substrate; that stretch reads NRMGF. The FMN site is built by Asn-146 and Asn-179. Asn-179 contributes to the substrate binding site. Residue Ser-182 is the Nucleophile of the active site. Asn-184 serves as a coordination point for substrate. 2 residues coordinate FMN: Lys-222 and Thr-250. Residue 251–252 coordinates substrate; the sequence is NT. FMN is bound by residues Gly-276, Gly-305, and 326–327; that span reads YS.

Belongs to the dihydroorotate dehydrogenase family. Type 2 subfamily. As to quaternary structure, monomer. The cofactor is FMN.

Its subcellular location is the cell membrane. It catalyses the reaction (S)-dihydroorotate + a quinone = orotate + a quinol. It participates in pyrimidine metabolism; UMP biosynthesis via de novo pathway; orotate from (S)-dihydroorotate (quinone route): step 1/1. Functionally, catalyzes the conversion of dihydroorotate to orotate with quinone as electron acceptor. In Streptomyces griseus subsp. griseus (strain JCM 4626 / CBS 651.72 / NBRC 13350 / KCC S-0626 / ISP 5235), this protein is Dihydroorotate dehydrogenase (quinone).